The following is a 264-amino-acid chain: Thymidylate synthase (264 aa).

A dUMP-binding site is contributed by R21. A (6R)-5,10-methylene-5,6,7,8-tetrahydrofolate-binding site is contributed by H51. 126–127 (RR) is a dUMP binding site. The active-site Nucleophile is the C146. DUMP contacts are provided by residues 166 to 169 (RSCD), N177, and 207 to 209 (HLY). A (6R)-5,10-methylene-5,6,7,8-tetrahydrofolate-binding site is contributed by D169. A263 provides a ligand contact to (6R)-5,10-methylene-5,6,7,8-tetrahydrofolate.

Belongs to the thymidylate synthase family. Bacterial-type ThyA subfamily. As to quaternary structure, homodimer.

Its subcellular location is the cytoplasm. It catalyses the reaction dUMP + (6R)-5,10-methylene-5,6,7,8-tetrahydrofolate = 7,8-dihydrofolate + dTMP. It participates in pyrimidine metabolism; dTTP biosynthesis. Catalyzes the reductive methylation of 2'-deoxyuridine-5'-monophosphate (dUMP) to 2'-deoxythymidine-5'-monophosphate (dTMP) while utilizing 5,10-methylenetetrahydrofolate (mTHF) as the methyl donor and reductant in the reaction, yielding dihydrofolate (DHF) as a by-product. This enzymatic reaction provides an intracellular de novo source of dTMP, an essential precursor for DNA biosynthesis. This chain is Thymidylate synthase, found in Pectobacterium carotovorum subsp. carotovorum (strain PC1).